A 284-amino-acid chain; its full sequence is RNA polymerase sigma factor RpoH (284 aa).

The sigma-70 factor domain-2 stretch occupies residues 53-122 (LILSHLRFVI…IHEYVLRNWR (70 aa)). The Interaction with polymerase core subunit RpoC signature appears at 77-80 (DLIQ). The interval 228 to 280 (ALLRLDERSRHIIHARWLDKNKKNTLQNIANNYGISAERVRQLEKNAMKKLKL) is sigma-70 factor domain-4. The segment at residues 253–272 (LQNIANNYGISAERVRQLEK) is a DNA-binding region (H-T-H motif).

This sequence belongs to the sigma-70 factor family. RpoH subfamily. As to quaternary structure, interacts with the RNA polymerase core enzyme.

It localises to the cytoplasm. Its function is as follows. Sigma factors are initiation factors that promote the attachment of RNA polymerase to specific initiation sites and are then released. This sigma factor is involved in regulation of expression of heat shock genes. The sequence is that of RNA polymerase sigma factor RpoH from Buchnera aphidicola subsp. Acyrthosiphon pisum (strain APS) (Acyrthosiphon pisum symbiotic bacterium).